The primary structure comprises 502 residues: Type II methyltransferase M.HincII (502 aa).

The protein belongs to the N(4)/N(6)-methyltransferase family.

It carries out the reaction a 2'-deoxyadenosine in DNA + S-adenosyl-L-methionine = an N(6)-methyl-2'-deoxyadenosine in DNA + S-adenosyl-L-homocysteine + H(+). Functionally, a gamma subtype methylase that recognizes the double-stranded sequence 5'-GTYRAC-3', methylates A-5 on both strands, and protects the DNA from cleavage by the HincII endonuclease. The sequence is that of Type II methyltransferase M.HincII from Haemophilus influenzae.